Reading from the N-terminus, the 343-residue chain is Phenylalanine--tRNA ligase alpha subunit (343 aa).

E258 contacts Mg(2+).

The protein belongs to the class-II aminoacyl-tRNA synthetase family. Phe-tRNA synthetase alpha subunit type 1 subfamily. In terms of assembly, tetramer of two alpha and two beta subunits. The cofactor is Mg(2+).

Its subcellular location is the cytoplasm. It catalyses the reaction tRNA(Phe) + L-phenylalanine + ATP = L-phenylalanyl-tRNA(Phe) + AMP + diphosphate + H(+). In Symbiobacterium thermophilum (strain DSM 24528 / JCM 14929 / IAM 14863 / T), this protein is Phenylalanine--tRNA ligase alpha subunit.